A 127-amino-acid chain; its full sequence is Calcitonin receptor-stimulating peptide 2 (127 aa).

Positions 1–25 (MGFWKLSPFLAIGLLVMYQAGILQA) are cleaved as a signal peptide. A propeptide spanning residues 26 to 81 (APFRSALENPLESATLTEDEICVLLTAVVKDYVQMKARELQQEQETEGSSLTAQKS) is cleaved from the precursor. The segment at 65-85 (LQQEQETEGSSLTAQKSSCKD) is disordered. Residues 72-81 (EGSSLTAQKS) are compositionally biased toward polar residues. A disulfide bridge connects residues cysteine 83 and cysteine 88.

Belongs to the calcitonin family.

The protein localises to the secreted. The sequence is that of Calcitonin receptor-stimulating peptide 2 (CRSP2) from Canis lupus familiaris (Dog).